Reading from the N-terminus, the 310-residue chain is Probable manganese-dependent inorganic pyrophosphatase (310 aa).

Positions 9, 13, 15, 76, 98, and 150 each coordinate Mn(2+).

This sequence belongs to the PPase class C family. It depends on Mn(2+) as a cofactor.

It localises to the cytoplasm. It carries out the reaction diphosphate + H2O = 2 phosphate + H(+). This chain is Probable manganese-dependent inorganic pyrophosphatase, found in Streptococcus thermophilus (strain CNRZ 1066).